Consider the following 484-residue polypeptide: MKIPEAVNHINVQNNIDLVDGKINPNKDTKALQKNISCVTNSSSSGISEKHLDHCADTVKSFLRKSIAAQSYSKMFSQGTSFKSLNLSIEAPSGARSSFRSLEHLDKVSRHYLSEIIQKTHPLSSDERHLLSIIINSDFNFRHQSNANLSNNTLNIKSFDKIKSENIQTYKNTFSEDIEEIANHDFVFFGVEISNHQETLPLNKTHHTVDFGANAYIIDHDSPYGYMTLTDHFDNAIPPVFYHEHQSFFLDNFKEVVDEVSRYVHGNQGKTDVPIFNTKDMRLGIGLHLIDFIRKSKDQRFREFCYNKNIDPVSLDRIINFVFQLEYHIPRMLSTDNFKKIKLRDISLEDAIKASNYEEINNKVTDKKMAHQALAYSLGNKKADIALYLLSKFNFTKQDVAEMEKMKNNRYCNLYDVEYLLSKDGANYKVLEYFINNGLVDVNKKFQKVNSGDTMLDNAMKSKDSKMIDFLLKNGAILGKRFEI.

Positions 143, 144, 145, 155, 157, 169, 172, and 173 each coordinate NAD(+). The active site involves glutamate 326. ANK repeat units follow at residues 369–398, 413–444, and 451–480; these read MAHQALAYSLGNKKADIALYLLSKFNFTKQ, NLYDVEYLLSKDGANYKVLEYFINNGLVDVNK, and SGDTMLDNAMKSKDSKMIDFLLKNGAILGK.

It belongs to the OspC family. Interacts with host calmodulin (CALM1, CALM2 and/or CALM3); specifically interacts with the apo form of calmodulin, preventing calcium-binding.

The protein localises to the secreted. The protein resides in the host cytoplasm. The catalysed reaction is L-arginyl-[protein] + NAD(+) = ADP-riboxanated L-argininyl-[protein] + nicotinamide + NH4(+) + H(+). Interaction with host calmodulin (CALM1, CALM2 and/or CALM3) is required to mediate arginine ADP-riboxanation of host caspases. Functionally, ADP-riboxanase effector that inhibits host cell pyroptosis. Acts by mediating arginine ADP-riboxanation of host CASP4/CASP11, blocking CASP4/CASP11 autoprocessing. This prevents CASP4 activation and ability to recognize and cleave GSDMD, thereby inhibiting LPS-induced pyroptosis. ADP-riboxanation takes place in two steps: OspC3 first catalyzes ADP-ribosylation of target Arg, and then initiates a deamination to remove one N-omega group. Independently of its ADP-riboxanase activity, acts as an inhibitor of calcium signaling by inhibiting host calmodulin, preventing activation of the JAK-STAT signaling pathway in response to interferon-beta. Mechanistically, acts by binding to the apo form of calmodulin, preventing calcium-binding and ability to activate host CaMK2 (CAMKII), which is required to stimulate the JAK-STAT signaling pathway in response to interferon-beta. The protein is Arginine ADP-riboxanase OspC3 of Shigella flexneri.